The primary structure comprises 122 residues: Large ribosomal subunit protein eL18 (122 aa).

This sequence belongs to the eukaryotic ribosomal protein eL18 family.

This chain is Large ribosomal subunit protein eL18, found in Pyrobaculum aerophilum (strain ATCC 51768 / DSM 7523 / JCM 9630 / CIP 104966 / NBRC 100827 / IM2).